Reading from the N-terminus, the 282-residue chain is Formamidopyrimidine-DNA glycosylase (282 aa).

Pro2 (schiff-base intermediate with DNA) is an active-site residue. Residue Glu3 is the Proton donor of the active site. Residue Lys61 is the Proton donor; for beta-elimination activity of the active site. Residues His93, Arg112, and Lys158 each contribute to the DNA site. The segment at 244 to 278 (DAYGREGEPCRRCGAIMRRDKFMNRSSFYCPRCQP) adopts an FPG-type zinc-finger fold. The active-site Proton donor; for delta-elimination activity is Arg268.

The protein belongs to the FPG family. Monomer. The cofactor is Zn(2+).

The catalysed reaction is Hydrolysis of DNA containing ring-opened 7-methylguanine residues, releasing 2,6-diamino-4-hydroxy-5-(N-methyl)formamidopyrimidine.. The enzyme catalyses 2'-deoxyribonucleotide-(2'-deoxyribose 5'-phosphate)-2'-deoxyribonucleotide-DNA = a 3'-end 2'-deoxyribonucleotide-(2,3-dehydro-2,3-deoxyribose 5'-phosphate)-DNA + a 5'-end 5'-phospho-2'-deoxyribonucleoside-DNA + H(+). In terms of biological role, involved in base excision repair of DNA damaged by oxidation or by mutagenic agents. Acts as a DNA glycosylase that recognizes and removes damaged bases. Has a preference for oxidized purines, such as 7,8-dihydro-8-oxoguanine (8-oxoG). Has AP (apurinic/apyrimidinic) lyase activity and introduces nicks in the DNA strand. Cleaves the DNA backbone by beta-delta elimination to generate a single-strand break at the site of the removed base with both 3'- and 5'-phosphates. The chain is Formamidopyrimidine-DNA glycosylase from Mycolicibacterium gilvum (strain PYR-GCK) (Mycobacterium gilvum (strain PYR-GCK)).